The following is a 162-amino-acid chain: Crossover junction endodeoxyribonuclease RuvC (162 aa).

Active-site residues include aspartate 8, glutamate 69, and histidine 141. Aspartate 8, glutamate 69, and histidine 141 together coordinate Mg(2+).

This sequence belongs to the RuvC family. In terms of assembly, homodimer which binds Holliday junction (HJ) DNA. The HJ becomes 2-fold symmetrical on binding to RuvC with unstacked arms; it has a different conformation from HJ DNA in complex with RuvA. In the full resolvosome a probable DNA-RuvA(4)-RuvB(12)-RuvC(2) complex forms which resolves the HJ. It depends on Mg(2+) as a cofactor.

It is found in the cytoplasm. The enzyme catalyses Endonucleolytic cleavage at a junction such as a reciprocal single-stranded crossover between two homologous DNA duplexes (Holliday junction).. Functionally, the RuvA-RuvB-RuvC complex processes Holliday junction (HJ) DNA during genetic recombination and DNA repair. Endonuclease that resolves HJ intermediates. Cleaves cruciform DNA by making single-stranded nicks across the HJ at symmetrical positions within the homologous arms, yielding a 5'-phosphate and a 3'-hydroxyl group; requires a central core of homology in the junction. The consensus cleavage sequence is 5'-(A/T)TT(C/G)-3'. Cleavage occurs on the 3'-side of the TT dinucleotide at the point of strand exchange. HJ branch migration catalyzed by RuvA-RuvB allows RuvC to scan DNA until it finds its consensus sequence, where it cleaves and resolves the cruciform DNA. The polypeptide is Crossover junction endodeoxyribonuclease RuvC (Wolbachia pipientis wMel).